The primary structure comprises 196 residues: Peptide deformylase (196 aa).

Cys-103 and His-145 together coordinate Fe cation. The active site involves Glu-146. His-149 provides a ligand contact to Fe cation.

This sequence belongs to the polypeptide deformylase family. Fe(2+) serves as cofactor.

It carries out the reaction N-terminal N-formyl-L-methionyl-[peptide] + H2O = N-terminal L-methionyl-[peptide] + formate. Functionally, removes the formyl group from the N-terminal Met of newly synthesized proteins. Requires at least a dipeptide for an efficient rate of reaction. N-terminal L-methionine is a prerequisite for activity but the enzyme has broad specificity at other positions. The polypeptide is Peptide deformylase (Rhodococcus opacus (strain B4)).